A 1061-amino-acid polypeptide reads, in one-letter code: MDFTEIHKRSRRKKFQQIHQDRKDEMIQQLGRRFHNQPSTSATYPSAVEDIPLPSEVPNVFGAPPPLTNADFHRNFLVDPDVVVSHSASLIRSNRHIVKAEDAEQYMMVSRERVGTTAERVLEDFNSRVIKPLKAKRRLQIDVPYIDHPLHSMRSKTPERKENEEDSDSEIRSSDSSSDAEYGSDVEEEPDSCRRKKRTHKIQKADSSQTKVEEKERQNTLLRMGIERKRNHPNAIDPHISYNEKGLGNDSPECRCPFPIRNRGLKHGYYAGENQVLKCSKNDRANLHYYTLHVTPAPNESQIQKTQMLINGMEYHFEGFTMVTHAPLPDCMTRRPVFKYSIDYEFQLIEEFMPTECFDPEDCNSIFEYIFHDIFELLDFDLYPKHLPPGTASCPTIHIVPRFVAMENNTTFIWSSKTVLAFFLLHGKNNMFSPEDVEKNCAMSDDAFGRTIAKLKQSIVLNPMKKPSALRADWFSRDLENKEMFLIQNTIRSQNFASPFLPQIAALEKKMSRLKQEKKDSGNKNPHYENLKAELIVLKDKHREARQLKLKLPVKDYIDTGLKPDVVAHVAMAIIASHHIRYNFSLSVFEKVIEYKFNDRRIVELALIHSSFRSYYGTTPDHVKNMISNCGYRKKYGAEERREKKKGIISLFNIMGGETSGGEPILHNERLEYLGDAVVELIASHHLFFILNHHFEGGLATYRTALVQNRNLAKLAMNCRIDEMLQFAHGADLINEAEWKHALANAFEALMAGVFLDSGIAPCDAIFSKAMYGKDPEMKKVWDHLNEHELKIEDPLGDRDLSRITPALTDFHRLEQIIGIEFNNIRLLAKAFTRRNVPFNDLTKGHNQRLEWLGDSVLQLIISDYLYRNFPLHHEGHMSLLRTSLVSNQTQSVVCDDLGFQEFVIKAPHRKNDLKMKDKADLVEAFIGALYVDKGLEYCRSFIRTVFCPRLKHFINSEKWNDAKSHLQQWCLAIRDSRNPNPAMPEYRLLGIQGPTNNRIFRVAVYFRGERLSSAAASNMHTAELKAAENALAALEKASFSRMREKYMSGRQHRLHRIFFS.

Disordered stretches follow at residues 1-20 (MDFTEIHKRSRRKKFQQIHQ) and 149-244 (PLHS…SYNE). Residues 156–173 (KTPERKENEEDSDSEIRS) show a composition bias toward basic and acidic residues. 2 consecutive RNase III domains span residues 586 to 759 (LSVF…LDSG) and 811 to 935 (FHRL…VDKG). The Mg(2+) site is built by Glu851, Asp921, and Glu924. The region spanning 962-1037 (DAKSHLQQWC…AENALAALEK (76 aa)) is the DRBM domain.

It belongs to the ribonuclease III family. Mg(2+) serves as cofactor. The cofactor is Mn(2+).

It localises to the nucleus. It carries out the reaction Endonucleolytic cleavage to 5'-phosphomonoester.. In terms of biological role, executes the initial step of microRNA (miRNA) processing in the nucleus, that is the cleavage of pri-miRNA to release pre-miRNA. Involved in pre-rRNA processing. Cleaves double-strand RNA and does not cleave single-strand RNA. Involved in fertility. Required for the function or synthesis of the let-7 miRNA. The polypeptide is Ribonuclease 3 (Caenorhabditis briggsae).